Reading from the N-terminus, the 365-residue chain is Chorismate synthase (365 aa).

R47 is an NADP(+) binding site. Residues 124 to 126 (RAS), G287, 302 to 306 (KPTAT), and R328 each bind FMN.

It belongs to the chorismate synthase family. As to quaternary structure, homotetramer. FMNH2 is required as a cofactor.

The catalysed reaction is 5-O-(1-carboxyvinyl)-3-phosphoshikimate = chorismate + phosphate. The protein operates within metabolic intermediate biosynthesis; chorismate biosynthesis; chorismate from D-erythrose 4-phosphate and phosphoenolpyruvate: step 7/7. Catalyzes the anti-1,4-elimination of the C-3 phosphate and the C-6 proR hydrogen from 5-enolpyruvylshikimate-3-phosphate (EPSP) to yield chorismate, which is the branch point compound that serves as the starting substrate for the three terminal pathways of aromatic amino acid biosynthesis. This reaction introduces a second double bond into the aromatic ring system. This is Chorismate synthase from Prochlorococcus marinus (strain AS9601).